We begin with the raw amino-acid sequence, 122 residues long: Basic phospholipase A2 homolog (122 aa).

7 disulfide bridges follow: Cys26-Cys116, Cys28-Cys44, Cys43-Cys96, Cys49-Cys122, Cys50-Cys89, Cys57-Cys82, and Cys75-Cys87. The tract at residues 106–117 (KKHRVTVKFLCK) is important for membrane-damaging activities in eukaryotes and bacteria; heparin-binding.

The protein belongs to the phospholipase A2 family. Group II subfamily. K49 sub-subfamily. In terms of assembly, homodimer; non-covalently linked. In terms of tissue distribution, expressed by the venom gland.

Its subcellular location is the secreted. In terms of biological role, snake venom phospholipase A2 (PLA2) that has almost no phospholipase A2 activity. Is myotoxic. Displays edema-inducing activities. A model of myotoxic mechanism has been proposed: an apo Lys49-PLA2 is activated by the entrance of a hydrophobic molecule (e.g. fatty acid) at the hydrophobic channel of the protein leading to a reorientation of a monomer. This reorientation causes a transition between 'inactive' to 'active' states, causing alignment of C-terminal and membrane-docking sites (MDoS) side-by-side and putting the membrane-disruption sites (MDiS) in the same plane, exposed to solvent and in a symmetric position for both monomers. The MDoS region stabilizes the toxin on membrane by the interaction of charged residues with phospholipid head groups. Subsequently, the MDiS region destabilizes the membrane with penetration of hydrophobic residues. This insertion causes a disorganization of the membrane, allowing an uncontrolled influx of ions (i.e. calcium and sodium), and eventually triggering irreversible intracellular alterations and cell death. This Protobothrops mucrosquamatus (Taiwan habu) protein is Basic phospholipase A2 homolog.